We begin with the raw amino-acid sequence, 130 residues long: MAVKKRAGAKKKEKKVIPVGKAYVQATFNNTIVTLTDLQGNVIAWASCGTAGFKGSRKGTPYAAQMAAQTAARKAAESGLRQVEVLVKGPGSGREAAIRSLQASGINVTAIRDVTPIPHNGCRPPKRRRV.

The protein belongs to the universal ribosomal protein uS11 family. As to quaternary structure, part of the 30S ribosomal subunit. Interacts with proteins S7 and S18. Binds to IF-3.

Its function is as follows. Located on the platform of the 30S subunit, it bridges several disparate RNA helices of the 16S rRNA. Forms part of the Shine-Dalgarno cleft in the 70S ribosome. This is Small ribosomal subunit protein uS11 from Dehalococcoides mccartyi (strain ATCC BAA-2100 / JCM 16839 / KCTC 5957 / BAV1).